A 398-amino-acid polypeptide reads, in one-letter code: tRNA-specific 2-thiouridylase MnmA (398 aa).

ATP contacts are provided by residues 19-26 and L45; that span reads AMSGGVDS. The active-site Nucleophile is the C113. C113 and C210 are oxidised to a cystine. G137 serves as a coordination point for ATP. The interval 160-162 is interaction with tRNA; sequence RDQ. C210 acts as the Cysteine persulfide intermediate in catalysis.

This sequence belongs to the MnmA/TRMU family.

It is found in the cytoplasm. It carries out the reaction S-sulfanyl-L-cysteinyl-[protein] + uridine(34) in tRNA + AH2 + ATP = 2-thiouridine(34) in tRNA + L-cysteinyl-[protein] + A + AMP + diphosphate + H(+). Catalyzes the 2-thiolation of uridine at the wobble position (U34) of tRNA, leading to the formation of s(2)U34. This chain is tRNA-specific 2-thiouridylase MnmA, found in Rhodopseudomonas palustris (strain BisB5).